A 212-amino-acid polypeptide reads, in one-letter code: Glycerol-3-phosphate acyltransferase (212 aa).

The next 5 helical transmembrane spans lie at 3–23, 51–71, 78–98, 115–135, and 139–159; these read ILLAALVAYLIGSVSFAVIVS, KAAILTLVGDAFKGWLAVWLA, DVAVAWVAIAVFVGHLYPVFF, AVHPVLGLATALTWLIVAFFF, and SLAALVAAVFAPVFDVFLFGT.

This sequence belongs to the PlsY family. In terms of assembly, probably interacts with PlsX.

It localises to the cell inner membrane. The enzyme catalyses an acyl phosphate + sn-glycerol 3-phosphate = a 1-acyl-sn-glycero-3-phosphate + phosphate. It functions in the pathway lipid metabolism; phospholipid metabolism. Functionally, catalyzes the transfer of an acyl group from acyl-phosphate (acyl-PO(4)) to glycerol-3-phosphate (G3P) to form lysophosphatidic acid (LPA). This enzyme utilizes acyl-phosphate as fatty acyl donor, but not acyl-CoA or acyl-ACP. The chain is Glycerol-3-phosphate acyltransferase from Burkholderia vietnamiensis (strain G4 / LMG 22486) (Burkholderia cepacia (strain R1808)).